The sequence spans 185 residues: Ribosome-recycling factor (185 aa).

Belongs to the RRF family.

It localises to the cytoplasm. Its function is as follows. Responsible for the release of ribosomes from messenger RNA at the termination of protein biosynthesis. May increase the efficiency of translation by recycling ribosomes from one round of translation to another. In Campylobacter fetus subsp. fetus (strain 82-40), this protein is Ribosome-recycling factor.